A 529-amino-acid polypeptide reads, in one-letter code: MTQTAEKPFGKLRSFLWPIHMHELKKVLPMFLMFFCISFNYTILRDTKDTLIVTAPGSGAEAIPFIKLWLVVPSAVVFMLIYAKLSNILSKQALFYAVLSPFVVFFALFPLVIYPYRHILHPTDFADTLQAILPSGFLGFIAMLRNWTFAAFYVLSELWGSVMLSLMFWGFANEITKISEAKRFYALFGVGANVALLISGPAIVWSSKLRASLGEGVDPWGVTLYFLMAMFLCSCAIIAACYWWMNRYVLTDPRFYNPAELKAKKSKPKMSMGESFSYLLRSPYMLLLALLVICYGVCINLVEVTWKSQLKMQFPNPNEYSAFMGTFSFWTGVVSVFVMLFIGGNVIRRFGWLTGALVTPVMVLVTGAIFFALVIFRDHATGLVAALGTTPLMLAVVVGAVQNILSKSTKYALFDATKEMAYIPLDQEQKVKGKAAIDVVAARFGKSGGSLIQQGLLVVCGSISAMTPFLAVALFAIIMVWLTSATKLNKLFLAASAAKEQELAEATAAAEKEASPAAKEVSPAIEGVS.

Transmembrane regions (helical) follow at residues 24 to 44 (LKKVLPMFLMFFCISFNYTIL), 63 to 83 (IPFIKLWLVVPSAVVFMLIYA), 93 to 113 (ALFYAVLSPFVVFFALFPLVI), 124 to 144 (DFADTLQAILPSGFLGFIAML), 149 to 169 (FAAFYVLSELWGSVMLSLMFW), 184 to 204 (FYALFGVGANVALLISGPAIV), 220 to 240 (WGVTLYFLMAMFLCSCAIIAA), 284 to 304 (YMLLLALLVICYGVCINLVEV), 322 to 342 (AFMGTFSFWTGVVSVFVMLFI), 356 to 376 (ALVTPVMVLVTGAIFFALVIF), 381 to 401 (TGLVAALGTTPLMLAVVVGAV), and 463 to 483 (ISAMTPFLAVALFAIIMVWLT). Over residues 509-520 (AAEKEASPAAKE) the composition is skewed to low complexity. Residues 509 to 529 (AAEKEASPAAKEVSPAIEGVS) form a disordered region.

This sequence belongs to the ADP/ATP translocase tlc family.

It is found in the cell membrane. The sequence is that of ADP,ATP carrier protein 1 (tlcA) from Chlamydia muridarum (strain MoPn / Nigg).